The primary structure comprises 103 residues: Putative inactive recombination-promoting nuclease-like protein YjiP (103 aa).

This sequence belongs to the Rpn/YhgA-like nuclease family.

Its function is as follows. This pseudogene is the N-terminal fragment of low activity DNA endonuclease RpnD which probably yields 3'-hydroxyl ends. The intact protein can be seen in this entry (AC B7NGZ6). Expression of the repaired protein increases the frequency of recA-independent recombination, but also decreases viability probably via DNA damage; in a RecA strain expression has no effect on viability but does induce the SOS repair response. May play a role in horizontal gene transfer. This Escherichia coli (strain K12) protein is Putative inactive recombination-promoting nuclease-like protein YjiP (yjiP).